The chain runs to 629 residues: tRNA uridine 5-carboxymethylaminomethyl modification enzyme MnmG (629 aa).

Residues 14–19, valine 126, and serine 181 each bind FAD; that span reads GAGHAG. 273–287 contacts NAD(+); that stretch reads GPRYCPSIEDKVVRF. Glutamine 370 lines the FAD pocket.

This sequence belongs to the MnmG family. Homodimer. Heterotetramer of two MnmE and two MnmG subunits. FAD is required as a cofactor.

It localises to the cytoplasm. Its function is as follows. NAD-binding protein involved in the addition of a carboxymethylaminomethyl (cmnm) group at the wobble position (U34) of certain tRNAs, forming tRNA-cmnm(5)s(2)U34. This is tRNA uridine 5-carboxymethylaminomethyl modification enzyme MnmG from Geobacillus kaustophilus (strain HTA426).